Consider the following 157-residue polypeptide: 3-dehydroquinate dehydratase (157 aa).

Tyr24 serves as the catalytic Proton acceptor. Asn75, His81, and Asp88 together coordinate substrate. His101 (proton donor) is an active-site residue. Substrate contacts are provided by residues Leu102–Ser103 and Arg112.

The protein belongs to the type-II 3-dehydroquinase family. As to quaternary structure, homododecamer.

It catalyses the reaction 3-dehydroquinate = 3-dehydroshikimate + H2O. Its pathway is metabolic intermediate biosynthesis; chorismate biosynthesis; chorismate from D-erythrose 4-phosphate and phosphoenolpyruvate: step 3/7. Its function is as follows. Catalyzes a trans-dehydration via an enolate intermediate. The chain is 3-dehydroquinate dehydratase from Brucella abortus (strain S19).